We begin with the raw amino-acid sequence, 663 residues long: UvrABC system protein B (663 aa).

Residues 1–10 (MIDKRDDKPF) show a composition bias toward basic and acidic residues. The segment at 1–23 (MIDKRDDKPFKLKSKYKPSGDQP) is disordered. In terms of domain architecture, Helicase ATP-binding spans 31–418 (DNIEGGEKAQ…TNTIIEQIIR (388 aa)). 44-51 (GATGTGKT) lines the ATP pocket. The short motif at 97-120 (YYDYYQPEAYVPSSDTYIEKDSSV) is the Beta-hairpin element. A Helicase C-terminal domain is found at 435–601 (QMDDLLGEIN…TIKKDIRGLI (167 aa)). One can recognise a UVR domain in the interval 627-662 (KEAINALQKQMQEAAELLDFELAAQMRDLILELKLM).

It belongs to the UvrB family. As to quaternary structure, forms a heterotetramer with UvrA during the search for lesions. Interacts with UvrC in an incision complex.

The protein localises to the cytoplasm. The UvrABC repair system catalyzes the recognition and processing of DNA lesions. A damage recognition complex composed of 2 UvrA and 2 UvrB subunits scans DNA for abnormalities. Upon binding of the UvrA(2)B(2) complex to a putative damaged site, the DNA wraps around one UvrB monomer. DNA wrap is dependent on ATP binding by UvrB and probably causes local melting of the DNA helix, facilitating insertion of UvrB beta-hairpin between the DNA strands. Then UvrB probes one DNA strand for the presence of a lesion. If a lesion is found the UvrA subunits dissociate and the UvrB-DNA preincision complex is formed. This complex is subsequently bound by UvrC and the second UvrB is released. If no lesion is found, the DNA wraps around the other UvrB subunit that will check the other stand for damage. This is UvrABC system protein B from Streptococcus pyogenes serotype M28 (strain MGAS6180).